Reading from the N-terminus, the 396-residue chain is Protein NDRG1-A (396 aa).

Residues 326 to 396 are disordered; sequence RSRTGSAASS…NSPKSMEVSC (71 aa). Residues 327-340 show a composition bias toward low complexity; that stretch reads SRTGSAASSSSQDG. 4 consecutive repeat copies span residues 340–349, 350–359, 360–369, and 370–379. Residues 340 to 379 form a 4 X 10 AA tandem repeats of G-[NS]-R-S-R-[AS]-H-T-[DGN]-[DET] region; the sequence is GNRSRSHTNEGSRSRSHTGDGNRSRAHTGDGNRSRSHTDT. The segment covering 346–377 has biased composition (basic and acidic residues); the sequence is HTNEGSRSRSHTGDGNRSRAHTGDGNRSRSHT. The segment covering 378–390 has biased composition (polar residues); that stretch reads DTNNINSDQNSPK.

This sequence belongs to the NDRG family.

May be involved in pronephros development, after specification of the pronephros. In Xenopus laevis (African clawed frog), this protein is Protein NDRG1-A (ndrg1-a).